A 148-amino-acid chain; its full sequence is uncharacterized protein (148 aa).

The segment at 55–148 (KMRCGESGAG…RNQGQLYPQP (94 aa)) is disordered. The span at 68–104 (RSNSAEVSSSQPALASKSQSKWGPTSNNPRGALTTTE) shows a compositional bias: polar residues.

This is an uncharacterized protein from Homo sapiens (Human).